The chain runs to 156 residues: Small ribosomal subunit protein uS7 (156 aa).

It belongs to the universal ribosomal protein uS7 family. Part of the 30S ribosomal subunit. Contacts proteins S9 and S11.

In terms of biological role, one of the primary rRNA binding proteins, it binds directly to 16S rRNA where it nucleates assembly of the head domain of the 30S subunit. Is located at the subunit interface close to the decoding center, probably blocks exit of the E-site tRNA. In Thermodesulfovibrio yellowstonii (strain ATCC 51303 / DSM 11347 / YP87), this protein is Small ribosomal subunit protein uS7.